Here is a 32-residue protein sequence, read N- to C-terminus: Islet amyloid polypeptide (32 aa).

The protein belongs to the calcitonin family. Can form homodimers. Interacts with IDE and INS. Interaction with INS inhibits homodimerization and fibril formation.

The protein localises to the secreted. Its function is as follows. Amylin/IAPP is a glucoregulatory peptide hormone that plays an important role in the regulation of energy homeostasis. Selectively inhibits insulin-stimulated glucose utilization and glycogen deposition in muscle, while not affecting adipocyte glucose metabolism. IAPP function is mediated by the CALCR-RAMPs (AMYRs) receptor complexes. Amylin can also bind CALCR receptor in the absence of RAMPs, although it is more selective for AMYRs. The polypeptide is Islet amyloid polypeptide (IAPP) (Ovis aries (Sheep)).